The chain runs to 364 residues: Aminomethyltransferase (364 aa).

The protein belongs to the GcvT family. The glycine cleavage system is composed of four proteins: P, T, L and H.

It catalyses the reaction N(6)-[(R)-S(8)-aminomethyldihydrolipoyl]-L-lysyl-[protein] + (6S)-5,6,7,8-tetrahydrofolate = N(6)-[(R)-dihydrolipoyl]-L-lysyl-[protein] + (6R)-5,10-methylene-5,6,7,8-tetrahydrofolate + NH4(+). Functionally, the glycine cleavage system catalyzes the degradation of glycine. This is Aminomethyltransferase from Citrobacter koseri (strain ATCC BAA-895 / CDC 4225-83 / SGSC4696).